A 146-amino-acid polypeptide reads, in one-letter code: Probable calcium-binding protein CML40 (146 aa).

The EF-hand 1 domain occupies 7–42 (NKRDEYQRVFSCFDKSHQGKVSVSTIERCVDAIKSG). The interval 44-65 (RAVVDQEDTTNPNPEESTDDKS) is disordered. An EF-hand 2 domain is found at 116-146 (KSLKDCEVMISQFDINRDGIINFDEFRAMMQ). 4 residues coordinate Ca(2+): D129, N131, D133, and E140.

Potential calcium sensor. The sequence is that of Probable calcium-binding protein CML40 (CML40) from Arabidopsis thaliana (Mouse-ear cress).